The following is a 568-amino-acid chain: MTTQSEYDYIIIGAGSAGNTLAARLTEDAGVTVLLLEAGGPDYRLDFRTQMPAALAFPLQGRRYNWAYETEPEPHMNNRRMECGRGKGLGGSSLINGMCYIRGNAMDYDGWAKEPGLEDWSYLDCLPYFRKAETRDIGPNDYHGGEGPVSVTKPKAGNNPLFHAMVEAGVQAGFPRTDDLNGYQQEGFGPMDRTVTPNGRRASTARGYLDEAKKRSTLTIVTHALTDRILFEGKRAVGVAYLVGDSDTRIQARARKEVLLCGGAIASPQILQRSGVGPAEVLNKLDIPVVHDLPGVGQNLQDHLEMYLQYACTQPVSLYPSLKWWNQPAIGAKWMFLGTGIGASNQFEAGGFIRSSEAFEWPNIQYHFLPVAINYNGTKGVQEHGFQAHVGSMRSPSRGRVQVKSKDPREYPSILFNYMSSEQDWQEFRDGIRLTREIMQQPALDPYRGREISPGIDVQSDEALDQFVREHAETAYHPSCSCKMGTDEMAVVDGQGRVHGLQSLRVVDASIMPIITTGNLNAPTIMIAEKIADKIRGRQPLPRSTADYFVAGDKPARGKPLREISHQA.

An FAD-binding site is contributed by 8-37 (DYIIIGAGSAGNTLAARLTEDAGVTVLLLE). The active-site Proton acceptor is the His477.

This sequence belongs to the GMC oxidoreductase family. It depends on FAD as a cofactor.

The enzyme catalyses choline + A = betaine aldehyde + AH2. It catalyses the reaction betaine aldehyde + NAD(+) + H2O = glycine betaine + NADH + 2 H(+). Its pathway is amine and polyamine biosynthesis; betaine biosynthesis via choline pathway; betaine aldehyde from choline (cytochrome c reductase route): step 1/1. Functionally, involved in the biosynthesis of the osmoprotectant glycine betaine. Catalyzes the oxidation of choline to betaine aldehyde and betaine aldehyde to glycine betaine at the same rate. The sequence is that of Oxygen-dependent choline dehydrogenase from Pseudomonas savastanoi pv. phaseolicola (strain 1448A / Race 6) (Pseudomonas syringae pv. phaseolicola (strain 1448A / Race 6)).